Here is a 243-residue protein sequence, read N- to C-terminus: Anti-sigma-K factor RskA (243 aa).

Over 1 to 102 (MTEPNNTDLL…RGGESRWRTA (102 aa)) the chain is Cytoplasmic. The chain crosses the membrane as a helical span at residues 103 to 123 (VLAAAAVAVVGLGALGVGLAL). The Extracellular portion of the chain corresponds to 124–243 (RPAVSPTTAD…SPAFAELPLT (120 aa)). Positions 223–243 (VEPPGGSQRPTSPAFAELPLT) are disordered.

It belongs to the anti-sigma-K factor family.

It is found in the cell membrane. In terms of biological role, an anti-sigma factor for extracytoplasmic function (ECF) sigma factor SigK. ECF sigma factors are held in an inactive form by an anti-sigma factor until released by regulated intramembrane proteolysis (RIP). RIP occurs when an extracytoplasmic signal triggers a concerted proteolytic cascade to transmit information and elicit cellular responses. The membrane-spanning regulatory substrate protein is first cut extracytoplasmically (site-1 protease, S1P), then within the membrane itself (site-2 protease, S2P, Rip1), while cytoplasmic proteases finish degrading the regulatory protein, liberating the sigma factor. This chain is Anti-sigma-K factor RskA (rskA), found in Mycobacterium sp. (strain JLS).